Reading from the N-terminus, the 65-residue chain is Trypsin inhibitor 1 (65 aa).

Cystine bridges form between Cys39–Cys56, Cys46–Cys58, and Cys52–Cys64.

The protein belongs to the protease inhibitor I7 (squash-type serine protease inhibitor) family.

Its subcellular location is the secreted. Inhibits trypsin. The protein is Trypsin inhibitor 1 of Trichosanthes kirilowii (Chinese snake gourd).